The primary structure comprises 156 residues: Transcriptional regulator MraZ (156 aa).

2 consecutive SpoVT-AbrB domains span residues 7–64 and 93–136; these read KERH…EPSV and LEMV…EPAR.

It belongs to the MraZ family. In terms of assembly, forms oligomers.

The protein resides in the cytoplasm. The protein localises to the nucleoid. The chain is Transcriptional regulator MraZ from Chlorobium phaeovibrioides (strain DSM 265 / 1930) (Prosthecochloris vibrioformis (strain DSM 265)).